A 130-amino-acid chain; its full sequence is U-scoloptoxin(17)-Er1a (130 aa).

The N-terminal stretch at 1–18 (MKLLVFALFLQVVQLSLA) is a signal peptide.

The protein belongs to the scoloptoxin-17 family. Contains 4 disulfide bonds. In terms of tissue distribution, expressed by the venom gland.

Its subcellular location is the secreted. The polypeptide is U-scoloptoxin(17)-Er1a (Ethmostigmus rubripes (Giant centipede)).